We begin with the raw amino-acid sequence, 273 residues long: Ribosomal RNA small subunit methyltransferase A (273 aa).

S-adenosyl-L-methionine is bound by residues Asn25, Leu27, Gly52, Glu73, Asp99, and Asn118.

It belongs to the class I-like SAM-binding methyltransferase superfamily. rRNA adenine N(6)-methyltransferase family. RsmA subfamily.

The protein resides in the cytoplasm. It catalyses the reaction adenosine(1518)/adenosine(1519) in 16S rRNA + 4 S-adenosyl-L-methionine = N(6)-dimethyladenosine(1518)/N(6)-dimethyladenosine(1519) in 16S rRNA + 4 S-adenosyl-L-homocysteine + 4 H(+). Its function is as follows. Specifically dimethylates two adjacent adenosines (A1518 and A1519) in the loop of a conserved hairpin near the 3'-end of 16S rRNA in the 30S particle. May play a critical role in biogenesis of 30S subunits. This Novosphingobium aromaticivorans (strain ATCC 700278 / DSM 12444 / CCUG 56034 / CIP 105152 / NBRC 16084 / F199) protein is Ribosomal RNA small subunit methyltransferase A.